A 246-amino-acid chain; its full sequence is Type III pantothenate kinase (246 aa).

An ATP-binding site is contributed by 11-18; that stretch reads DIGNSFIK. Substrate contacts are provided by residues Y95 and 102–105; that span reads GVDR. The active-site Proton acceptor is D104. D125 is a K(+) binding site. Residue T128 participates in ATP binding. T179 serves as a coordination point for substrate.

This sequence belongs to the type III pantothenate kinase family. As to quaternary structure, homodimer. NH4(+) is required as a cofactor. Requires K(+) as cofactor.

Its subcellular location is the cytoplasm. It catalyses the reaction (R)-pantothenate + ATP = (R)-4'-phosphopantothenate + ADP + H(+). Its pathway is cofactor biosynthesis; coenzyme A biosynthesis; CoA from (R)-pantothenate: step 1/5. Its function is as follows. Catalyzes the phosphorylation of pantothenate (Pan), the first step in CoA biosynthesis. The protein is Type III pantothenate kinase of Pseudoalteromonas atlantica (strain T6c / ATCC BAA-1087).